Here is a 195-residue protein sequence, read N- to C-terminus: Auxin-responsive protein IAA14 (195 aa).

Disordered stretches follow at residues 1–61 and 85–107; these read MAAE…SPAS and STAA…NKGG. The EAR-like (transcriptional repression) signature appears at 10 to 14; sequence LRLGL. One can recognise a PB1 domain in the interval 108-191; that stretch reads GLYVKVSMDG…SCKKLRIMRG (84 aa).

This sequence belongs to the Aux/IAA family. In terms of assembly, homodimers and heterodimers. Highly expressed in flowers. Expressed in etiolated seedlings.

It is found in the nucleus. Functionally, aux/IAA proteins are short-lived transcriptional factors that function as repressors of early auxin response genes at low auxin concentrations. The sequence is that of Auxin-responsive protein IAA14 (IAA14) from Oryza sativa subsp. japonica (Rice).